The primary structure comprises 728 residues: Homoaconitase, mitochondrial (728 aa).

The transit peptide at 1–24 (MVAIPRLARLSVPAWALSARGRFY) directs the protein to the mitochondrion. Residues Cys362, Cys422, and Cys425 each coordinate [4Fe-4S] cluster.

The protein belongs to the aconitase/IPM isomerase family. [4Fe-4S] cluster serves as cofactor.

It localises to the mitochondrion. It carries out the reaction (2R,3S)-homoisocitrate = cis-homoaconitate + H2O. The protein operates within amino-acid biosynthesis; L-lysine biosynthesis via AAA pathway; L-alpha-aminoadipate from 2-oxoglutarate: step 3/5. Functionally, catalyzes the reversible hydration of cis-homoaconitate to (2R,3S)-homoisocitrate, a step in the alpha-aminoadipate pathway for lysine biosynthesis. The sequence is that of Homoaconitase, mitochondrial (LYS4) from Cryptococcus neoformans var. neoformans serotype D (strain JEC21 / ATCC MYA-565) (Filobasidiella neoformans).